Consider the following 309-residue polypeptide: Vomeronasal type-1 receptor 52 (309 aa).

Over 1-19 the chain is Extracellular; it reads MNKDHTLYCSVYIRNAFFS. A helical transmembrane segment spans residues 20–40; that stretch reads EIGIGISANSCLLLFHTFMFI. At 41–49 the chain is on the cytoplasmic side; that stretch reads RGHRPRLTD. A helical transmembrane segment spans residues 50–70; the sequence is LPIGFVALIHLVMLLLAAYIT. The Extracellular portion of the chain corresponds to 71–93; the sequence is EDFFMSSGGWDDITCKLVIFLHR. A disulfide bond links C85 and C172. A helical membrane pass occupies residues 94–114; it reads FFRSLSVCATCLLSVFQAIIL. The Cytoplasmic segment spans residues 115-134; that stretch reads CPQSSHLAKLKQNSPHQLSY. The helical transmembrane segment at 135–155 threads the bilayer; sequence FFIFLSIFYTSISSHILIAAI. Over 156–187 the chain is Extracellular; the sequence is PTQNITFVNLIYITNSCSFLPLSSSMQHTFST. N-linked (GlcNAc...) asparagine glycosylation is present at N159. Residues 188 to 208 traverse the membrane as a helical segment; the sequence is LLAFRNVFVIGLMGLSTCYMA. Residues 209-238 lie on the Cytoplasmic side of the membrane; sequence TLLCRHKTRSQRLQNSKLSPKATPEQRALR. The helical transmembrane segment at 239–259 threads the bilayer; that stretch reads TILMLMSFFLLMSTFDSIISY. At 260-268 the chain is on the extracellular side; sequence SRTILQGNP. Residues 269-289 form a helical membrane-spanning segment; the sequence is LPFCFQILVAHSYAAVSPLLV. At 290 to 309 the chain is on the cytoplasmic side; sequence LSNEKRITNLLISMYEKIVL.

Belongs to the G-protein coupled receptor 1 family.

It localises to the cell membrane. Its function is as follows. Putative pheromone receptor implicated in the regulation of social and reproductive behavior. This is Vomeronasal type-1 receptor 52 (Vmn1r52) from Mus musculus (Mouse).